An 889-amino-acid chain; its full sequence is DNA mismatch repair protein MutS (889 aa).

Positions 1 to 17 (MPKTNSSAASTNANPSS) are enriched in low complexity. The disordered stretch occupies residues 1–20 (MPKTNSSAASTNANPSSLQQ). 640 to 647 (GPNMGGKS) is a binding site for ATP.

This sequence belongs to the DNA mismatch repair MutS family.

Functionally, this protein is involved in the repair of mismatches in DNA. It is possible that it carries out the mismatch recognition step. This protein has a weak ATPase activity. The sequence is that of DNA mismatch repair protein MutS from Pseudoalteromonas atlantica (strain T6c / ATCC BAA-1087).